The primary structure comprises 564 residues: Probable metalloprotease ARX1 (564 aa).

The protein belongs to the peptidase M24 family. In terms of assembly, component of the nucleoplasmic and cytoplasmic pre-60S ribosomal particles.

It localises to the cytoplasm. It is found in the nucleus. Its function is as follows. Probable metalloprotease involved in proper assembly of pre-ribosomal particles during the biogenesis of the 60S ribosomal subunit. Accompanies the pre-60S particles to the cytoplasm. The chain is Probable metalloprotease ARX1 (ARX1) from Candida albicans (strain SC5314 / ATCC MYA-2876) (Yeast).